We begin with the raw amino-acid sequence, 142 residues long: Large ribosomal subunit protein uL13 (142 aa).

Belongs to the universal ribosomal protein uL13 family. In terms of assembly, part of the 50S ribosomal subunit.

Functionally, this protein is one of the early assembly proteins of the 50S ribosomal subunit, although it is not seen to bind rRNA by itself. It is important during the early stages of 50S assembly. This is Large ribosomal subunit protein uL13 from Salmonella agona (strain SL483).